Reading from the N-terminus, the 444-residue chain is Signal recognition particle 54 kDa protein (444 aa).

GTP-binding positions include 104-111 (GLQGSGKT), 184-188 (DTAGR), and 242-245 (TKLD).

This sequence belongs to the GTP-binding SRP family. SRP54 subfamily. As to quaternary structure, part of the signal recognition particle protein translocation system, which is composed of SRP and FtsY. Archaeal SRP consists of a 7S RNA molecule of 300 nucleotides and two protein subunits: SRP54 and SRP19.

It is found in the cytoplasm. The catalysed reaction is GTP + H2O = GDP + phosphate + H(+). Its function is as follows. Involved in targeting and insertion of nascent membrane proteins into the cytoplasmic membrane. Binds to the hydrophobic signal sequence of the ribosome-nascent chain (RNC) as it emerges from the ribosomes. The SRP-RNC complex is then targeted to the cytoplasmic membrane where it interacts with the SRP receptor FtsY. The chain is Signal recognition particle 54 kDa protein from Methanothrix thermoacetophila (strain DSM 6194 / JCM 14653 / NBRC 101360 / PT) (Methanosaeta thermophila).